Consider the following 1305-residue polypeptide: Contactin-associated protein like 5-3 (1305 aa).

Positions 1 to 24 (MDSVPRLNSVFTLVLSGLWHFGLT) are cleaved as a signal peptide. The region spanning 25-174 (ATNYNCDDPL…IGMRVEVYGC (150 aa)) is the F5/8 type C domain. The Extracellular portion of the chain corresponds to 25–1235 (ATNYNCDDPL…EPLTNAVPSD (1211 aa)). Laminin G-like domains are found at residues 180–360 (VADF…TFSC) and 367–544 (PITF…IDLC). The N-linked (GlcNAc...) asparagine glycan is linked to Asn282. Cys329 and Cys360 form a disulfide bridge. A glycan (N-linked (GlcNAc...) asparagine) is linked at Asn496. Cystine bridges form between Cys512–Cys544, Cys550–Cys561, and Cys555–Cys570. In terms of domain architecture, EGF-like 1 spans 546-583 (IKDRCLPNYCEHGGQCAQTWTNFYCNCSDTGYTGATCH). Asn571 carries N-linked (GlcNAc...) asparagine glycosylation. Residues Cys572 and Cys582 are joined by a disulfide bond. Residues 584–790 (DSIYEQSCEV…LRCYGDRHFW (207 aa)) enclose the Fibrinogen C-terminal domain. Residues 791-956 (NAVSFSTEAS…KVTSGVRPGC (166 aa)) enclose the Laminin G-like 3 domain. Disulfide bonds link Cys929–Cys956, Cys960–Cys973, Cys967–Cys982, and Cys984–Cys994. The 39-residue stretch at 957 to 995 (PGHCSSYGRNCQNGGKCVEKHIGYSCDCTNSPYEGPFCQ) folds into the EGF-like 2 domain. Residues 1013–1198 (QEPYSVTKNT…VQRTLTESSC (186 aa)) form the Laminin G-like 4 domain. 2 N-linked (GlcNAc...) asparagine glycosylation sites follow: Asn1023 and Asn1057. A disulfide bond links Cys1163 and Cys1198. Residues 1236–1256 (LAVIGGIIAVVTFISFSVIGI) traverse the membrane as a helical segment. At 1257–1305 (MTHFFYQHKRSHYASQMKEKEYPENVDSSSRNDIDLQNTTRECKQEDFI) the chain is on the cytoplasmic side.

It belongs to the neurexin family. Expressed in brain.

It is found in the membrane. Its function is as follows. May play a role in the correct development and proper functioning of the peripheral and central nervous system and be involved in cell adhesion and intercellular communication. The sequence is that of Contactin-associated protein like 5-3 (Cntnap5c) from Mus musculus (Mouse).